The following is a 259-amino-acid chain: Adenosylcobinamide-GDP ribazoletransferase (259 aa).

Transmembrane regions (helical) follow at residues 41 to 61 (AAIW…AIVF), 67 to 87 (FGLA…IATG), 119 to 139 (IGAY…NVLS), 148 to 168 (LFAL…FMHL), 179 to 199 (AGAG…GAIP), 200 to 220 (LLLL…LLFA), and 237 to 257 (TIGA…SVAL).

It belongs to the CobS family. The cofactor is Mg(2+).

Its subcellular location is the cell inner membrane. The catalysed reaction is alpha-ribazole + adenosylcob(III)inamide-GDP = adenosylcob(III)alamin + GMP + H(+). The enzyme catalyses alpha-ribazole 5'-phosphate + adenosylcob(III)inamide-GDP = adenosylcob(III)alamin 5'-phosphate + GMP + H(+). The protein operates within cofactor biosynthesis; adenosylcobalamin biosynthesis; adenosylcobalamin from cob(II)yrinate a,c-diamide: step 7/7. Its function is as follows. Joins adenosylcobinamide-GDP and alpha-ribazole to generate adenosylcobalamin (Ado-cobalamin). Also synthesizes adenosylcobalamin 5'-phosphate from adenosylcobinamide-GDP and alpha-ribazole 5'-phosphate. The chain is Adenosylcobinamide-GDP ribazoletransferase from Mesorhizobium japonicum (strain LMG 29417 / CECT 9101 / MAFF 303099) (Mesorhizobium loti (strain MAFF 303099)).